Consider the following 90-residue polypeptide: Probable Fe(2+)-trafficking protein (90 aa).

It belongs to the Fe(2+)-trafficking protein family.

Could be a mediator in iron transactions between iron acquisition and iron-requiring processes, such as synthesis and/or repair of Fe-S clusters in biosynthetic enzymes. The chain is Probable Fe(2+)-trafficking protein from Leptothrix cholodnii (strain ATCC 51168 / LMG 8142 / SP-6) (Leptothrix discophora (strain SP-6)).